The following is a 443-amino-acid chain: Glutamate-1-semialdehyde 2,1-aminomutase (443 aa).

The segment covering 1–16 (MSVNADSQHSNNSSHQ) has biased composition (low complexity). Positions 1–22 (MSVNADSQHSNNSSHQASEKAF) are disordered. An N6-(pyridoxal phosphate)lysine modification is found at lysine 277.

It belongs to the class-III pyridoxal-phosphate-dependent aminotransferase family. HemL subfamily. In terms of assembly, homodimer. The cofactor is pyridoxal 5'-phosphate.

It is found in the cytoplasm. It carries out the reaction (S)-4-amino-5-oxopentanoate = 5-aminolevulinate. The protein operates within porphyrin-containing compound metabolism; protoporphyrin-IX biosynthesis; 5-aminolevulinate from L-glutamyl-tRNA(Glu): step 2/2. In Corynebacterium jeikeium (strain K411), this protein is Glutamate-1-semialdehyde 2,1-aminomutase.